We begin with the raw amino-acid sequence, 638 residues long: Threonine--tRNA ligase (638 aa).

Residues Met1–Thr61 enclose the TGS domain. The catalytic stretch occupies residues Asp244–Pro536. Residues Cys336, His387, and His513 each coordinate Zn(2+).

The protein belongs to the class-II aminoacyl-tRNA synthetase family. In terms of assembly, homodimer. It depends on Zn(2+) as a cofactor.

Its subcellular location is the cytoplasm. The enzyme catalyses tRNA(Thr) + L-threonine + ATP = L-threonyl-tRNA(Thr) + AMP + diphosphate + H(+). Functionally, catalyzes the attachment of threonine to tRNA(Thr) in a two-step reaction: L-threonine is first activated by ATP to form Thr-AMP and then transferred to the acceptor end of tRNA(Thr). Also edits incorrectly charged L-seryl-tRNA(Thr). This is Threonine--tRNA ligase from Paramagnetospirillum magneticum (strain ATCC 700264 / AMB-1) (Magnetospirillum magneticum).